The chain runs to 635 residues: Threonine--tRNA ligase (635 aa).

A TGS domain is found at 1 to 61; sequence MIKITLKDGK…HKDSSLEILT (61 aa). The segment at 242 to 532 is catalytic; it reads DHRKLGKELD…LIEQYAGAFP (291 aa). Zn(2+)-binding residues include C333, H384, and H509.

The protein belongs to the class-II aminoacyl-tRNA synthetase family. Homodimer. The cofactor is Zn(2+).

The protein resides in the cytoplasm. The enzyme catalyses tRNA(Thr) + L-threonine + ATP = L-threonyl-tRNA(Thr) + AMP + diphosphate + H(+). Catalyzes the attachment of threonine to tRNA(Thr) in a two-step reaction: L-threonine is first activated by ATP to form Thr-AMP and then transferred to the acceptor end of tRNA(Thr). Also edits incorrectly charged L-seryl-tRNA(Thr). This chain is Threonine--tRNA ligase, found in Clostridium botulinum (strain 657 / Type Ba4).